The chain runs to 87 residues: CRISPR-associated endoribonuclease Cas2 (87 aa).

Residue aspartate 8 participates in Mg(2+) binding.

The protein belongs to the CRISPR-associated endoribonuclease Cas2 protein family. In terms of assembly, homodimer, forms a heterotetramer with a Cas1 homodimer. Mg(2+) serves as cofactor.

Functionally, CRISPR (clustered regularly interspaced short palindromic repeat), is an adaptive immune system that provides protection against mobile genetic elements (viruses, transposable elements and conjugative plasmids). CRISPR clusters contain sequences complementary to antecedent mobile elements and target invading nucleic acids. CRISPR clusters are transcribed and processed into CRISPR RNA (crRNA). Functions as a ssRNA-specific endoribonuclease. Involved in the integration of spacer DNA into the CRISPR cassette. The chain is CRISPR-associated endoribonuclease Cas2 from Frankia alni (strain DSM 45986 / CECT 9034 / ACN14a).